Reading from the N-terminus, the 345-residue chain is Phosphoribosylformylglycinamidine cyclo-ligase (345 aa).

The protein belongs to the AIR synthase family.

It localises to the cytoplasm. It catalyses the reaction 2-formamido-N(1)-(5-O-phospho-beta-D-ribosyl)acetamidine + ATP = 5-amino-1-(5-phospho-beta-D-ribosyl)imidazole + ADP + phosphate + H(+). The protein operates within purine metabolism; IMP biosynthesis via de novo pathway; 5-amino-1-(5-phospho-D-ribosyl)imidazole from N(2)-formyl-N(1)-(5-phospho-D-ribosyl)glycinamide: step 2/2. This is Phosphoribosylformylglycinamidine cyclo-ligase from Histophilus somni (strain 129Pt) (Haemophilus somnus).